Here is a 467-residue protein sequence, read N- to C-terminus: Argininosuccinate lyase (467 aa).

The protein belongs to the lyase 1 family. Argininosuccinate lyase subfamily.

The protein localises to the cytoplasm. The enzyme catalyses 2-(N(omega)-L-arginino)succinate = fumarate + L-arginine. It functions in the pathway amino-acid biosynthesis; L-arginine biosynthesis; L-arginine from L-ornithine and carbamoyl phosphate: step 3/3. The polypeptide is Argininosuccinate lyase (Nitrosococcus oceani (strain ATCC 19707 / BCRC 17464 / JCM 30415 / NCIMB 11848 / C-107)).